A 157-amino-acid polypeptide reads, in one-letter code: Endoribonuclease YbeY (157 aa).

Residues His122, His126, and His132 each coordinate Zn(2+).

The protein belongs to the endoribonuclease YbeY family. Zn(2+) serves as cofactor.

It is found in the cytoplasm. Single strand-specific metallo-endoribonuclease involved in late-stage 70S ribosome quality control and in maturation of the 3' terminus of the 16S rRNA. The protein is Endoribonuclease YbeY of Bacillus subtilis (strain 168).